Reading from the N-terminus, the 243-residue chain is Probable transcriptional regulatory protein TTE1135 (243 aa).

It belongs to the TACO1 family.

It is found in the cytoplasm. This chain is Probable transcriptional regulatory protein TTE1135, found in Caldanaerobacter subterraneus subsp. tengcongensis (strain DSM 15242 / JCM 11007 / NBRC 100824 / MB4) (Thermoanaerobacter tengcongensis).